Consider the following 500-residue polypeptide: Probable cytosol aminopeptidase (500 aa).

Mn(2+) is bound by residues Lys-261 and Asp-266. Lys-273 is a catalytic residue. Asp-284, Asp-343, and Glu-345 together coordinate Mn(2+). The active site involves Arg-347.

The protein belongs to the peptidase M17 family. Requires Mn(2+) as cofactor.

The protein localises to the cytoplasm. The enzyme catalyses Release of an N-terminal amino acid, Xaa-|-Yaa-, in which Xaa is preferably Leu, but may be other amino acids including Pro although not Arg or Lys, and Yaa may be Pro. Amino acid amides and methyl esters are also readily hydrolyzed, but rates on arylamides are exceedingly low.. It carries out the reaction Release of an N-terminal amino acid, preferentially leucine, but not glutamic or aspartic acids.. In terms of biological role, presumably involved in the processing and regular turnover of intracellular proteins. Catalyzes the removal of unsubstituted N-terminal amino acids from various peptides. This Bacillus subtilis (strain 168) protein is Probable cytosol aminopeptidase (pepA).